The sequence spans 1120 residues: Prophage side tail fiber protein homolog StfR (1120 aa).

3 disordered regions span residues 129–154 (KSAS…SARA), 221–442 (SAST…ATRA), and 960–1021 (SGRA…AGAH). Low complexity-rich tracts occupy residues 221–239 (SAST…ARDA), 248–395 (SSET…SASA), and 402–442 (RQAS…ATRA). A compositionally biased stretch (polar residues) spans 985 to 1021 (DLGTKTTSSFDYGTKSTNNTGAHTHSVSGSTNSAGAH).

This sequence belongs to the tail fiber family.

In Escherichia coli (strain K12), this protein is Prophage side tail fiber protein homolog StfR (stfR).